The sequence spans 66 residues: Large ribosomal subunit protein bL35 (66 aa).

2 stretches are compositionally biased toward basic residues: residues 1-15 (MPKLKTKSSAKKRFK) and 28-45 (TKRHGMTKRSKRSLRTRR). The segment at 1-49 (MPKLKTKSSAKKRFKVTASGRVMSAQSTKRHGMTKRSKRSLRTRRGIAQ) is disordered.

It belongs to the bacterial ribosomal protein bL35 family.

The polypeptide is Large ribosomal subunit protein bL35 (Anaplasma marginale (strain Florida)).